Reading from the N-terminus, the 378-residue chain is MKCAHFDQQQCLSCRHIKQSMSVQVAAKSQVLSQLLSDFEVEQWHEPVFGPDSGFRNKAKMVVLGAAHQPILGIVTPTGEPVSLCDCNLYPEDMQLLLHRLEQFVRQAGIPPYNVDKAKGELKFILLTRSQIKGEYLLRFVLKSHKSIERIERELPKLLSEYPQIKVVSVNIQPVHMAILEGEEEIFLTEETRLSEQFNDVPLFIRPKSFFQTHPQIAAKLYQTAREWVAELKPSSLWDLFCGVGGFGLHCASKTIPLTGIEISSEAIACAKISAETMGLTQVDFTALDSTGFAQGCDATDKPDVVIVNPPRRGIGESLCQSLSDFAPKAILYSSCNPHTLAKDLANIQGYHIQKVQLFDMFPHTDHFEVLVMLVKPS.

Cysteine 3, cysteine 11, cysteine 14, and cysteine 87 together coordinate [4Fe-4S] cluster. S-adenosyl-L-methionine contacts are provided by glutamine 212, phenylalanine 241, glutamate 262, and asparagine 309. Cysteine 336 (nucleophile) is an active-site residue.

This sequence belongs to the class I-like SAM-binding methyltransferase superfamily. RNA M5U methyltransferase family. RlmC subfamily.

The enzyme catalyses uridine(747) in 23S rRNA + S-adenosyl-L-methionine = 5-methyluridine(747) in 23S rRNA + S-adenosyl-L-homocysteine + H(+). Catalyzes the formation of 5-methyl-uridine at position 747 (m5U747) in 23S rRNA. This chain is 23S rRNA (uracil(747)-C(5))-methyltransferase RlmC, found in Shewanella pealeana (strain ATCC 700345 / ANG-SQ1).